Here is a 469-residue protein sequence, read N- to C-terminus: Beta-1,3-xylanase (469 aa).

Positions 1 to 22 (MKKLAKMISIATLGACAFSAHA) are cleaved as a signal peptide. In terms of domain architecture, GH26 spans 23 to 293 (LDGKLVPNEG…LKGFTYINAD (271 aa)). Residue glutamate 138 is the Proton donor of the active site. Glutamate 234 acts as the Nucleophile in catalysis. The span at 352–374 (DNGGDNGGDNGGDNGGDNGGDNG) shows a compositional bias: gly residues. A disordered region spans residues 352 to 380 (DNGGDNGGDNGGDNGGDNGGDNGGTEPPE). Residues 377–469 (EPPENCQDDF…NITFTTQVCN (93 aa)) form a carbohydrate binding module (CBM) region. 2 disulfides stabilise this stretch: cysteine 382–cysteine 468 and cysteine 413–cysteine 418.

The protein belongs to the glycosyl hydrolase 26 family.

It carries out the reaction Random hydrolysis of (1-&gt;3)-beta-D-glycosidic linkages in (1-&gt;3)-beta-D-xylans.. Its activity is regulated as follows. Completely inhibited by CuCl(2), FeCl(3), HgCl(2) and N-bromosuccinimide. Moderately inhibited by AgCl, AlCl(3), Pb(CH(3)COO)(2) and dithiothreitol. BaCl(2), CaCl(2), KCl, MgCl(2), MnCl(2), NaCl, ZnCl(2), ethylenediaminetetraacetic acid, N-ethylmaleimide, iodoacetic acid and p-chloromercuribenzoic acid have little or no effect on activity. In terms of biological role, catalyzes the hydrolysis of beta-1,3-xylan into oligosaccharides, mainly xylotriose and xylobiose with smaller amounts of xylotetraose, xylose, xylopentaose and xylohexaose. Does not hydrolyze xylobiose, p-nitrophenyl-beta-xyloside, beta-1,4-xylan, carboxymethylcellulose, curdlan, glucomannan or beta-1,4-mannan. This chain is Beta-1,3-xylanase, found in Alcaligenes sp.